We begin with the raw amino-acid sequence, 97 residues long: Lipolysis-activating peptide 1-alpha chain (97 aa).

An N-terminal signal peptide occupies residues 1–21 (MNIMLFCSVFILVSLTGLSVS). The LCN-type CS-alpha/beta domain maps to 25–88 (PGNYPMSLYG…FWAAHKNHCK (64 aa)). 3 disulfide bridges follow: C39–C62, C48–C67, and C52–C69.

It belongs to the long (3 C-C) scorpion toxin superfamily. Monomer (edited version) and heterodimer (non-edited version) of this alpha chain and a beta chain (AC P0CI43). As to expression, expressed by the venom gland.

The protein localises to the secreted. In terms of biological role, the heterodimer non-edited LVP1 induces lipolysis in rat adipocytes. Induction of lipolysis by LVP1 appears to be mediated through the beta-2 adrenergic receptor pathway (ADRB2). Functionally, the edited BmKBTx-like, similar to beta-toxins, may modulate voltage-gated sodium channels (Nav) and may block voltage-gated potassium channels (Kv). This chain is Lipolysis-activating peptide 1-alpha chain, found in Lychas mucronatus (Chinese swimming scorpion).